The following is a 396-amino-acid chain: Elongation factor Tu 1 (396 aa).

A tr-type G domain is found at 10-206 (KPHVNVGTIG…ALDTYIPTPE (197 aa)). The tract at residues 19-26 (GHVDHGKT) is G1. Position 19 to 26 (19 to 26 (GHVDHGKT)) interacts with GTP. Thr26 provides a ligand contact to Mg(2+). Residues 60–64 (GITIN) form a G2 region. Positions 81–84 (DCPG) are G3. GTP-binding positions include 81-85 (DCPGH) and 136-139 (NKCD). The tract at residues 136–139 (NKCD) is G4. Residues 174–176 (SAK) form a G5 region.

This sequence belongs to the TRAFAC class translation factor GTPase superfamily. Classic translation factor GTPase family. EF-Tu/EF-1A subfamily. Monomer.

The protein localises to the cytoplasm. It carries out the reaction GTP + H2O = GDP + phosphate + H(+). Functionally, GTP hydrolase that promotes the GTP-dependent binding of aminoacyl-tRNA to the A-site of ribosomes during protein biosynthesis. This Acidovorax sp. (strain JS42) protein is Elongation factor Tu 1.